A 34-amino-acid polypeptide reads, in one-letter code: Thermomycolin (34 aa).

Serine 33 functions as the Charge relay system in the catalytic mechanism.

The protein belongs to the peptidase S8 family.

It localises to the secreted. It carries out the reaction Rather non-specific hydrolysis of proteins. Preferential cleavage: -Ala-|-Xaa-, -Tyr-|-Xaa-, -Phe-|-Xaa- in small molecular substrates.. In terms of biological role, this is an extracellular proteinase with a general specificity for apolar residues. This chain is Thermomycolin, found in Malbranchea cinnamomea (Thermophilic fungus).